The sequence spans 424 residues: uncharacterized protein (424 aa).

Position 259 is an N6-(pyridoxal phosphate)lysine (Lys259).

Belongs to the class-III pyridoxal-phosphate-dependent aminotransferase family. Requires pyridoxal 5'-phosphate as cofactor.

This is an uncharacterized protein from Archaeoglobus fulgidus (strain ATCC 49558 / DSM 4304 / JCM 9628 / NBRC 100126 / VC-16).